The chain runs to 408 residues: Bone morphogenetic protein 4 (408 aa).

Residues 1 to 19 (MIPGNRMLMVVLLCQVLLG) form the signal peptide. A propeptide spanning residues 20–292 (GATDASLIPE…HTLTRRRAKR (273 aa)) is cleaved from the precursor. S91 is subject to Phosphoserine. The interval 91 to 113 (SGEEEEEEQSQGTGLEYPERPAS) is disordered. N144 and N209 each carry an N-linked (GlcNAc...) asparagine glycan. Residues 281–307 (RGHTLTRRRAKRSPKHHPQRSRKKNKN) form a disordered region. Residues 284–307 (TLTRRRAKRSPKHHPQRSRKKNKN) are compositionally biased toward basic residues. Disulfide bonds link C308–C373, C337–C405, and C341–C407. Residues N350 and N365 are each glycosylated (N-linked (GlcNAc...) asparagine).

It belongs to the TGF-beta family. Homodimer; disulfide-linked. Interacts with GREM2. Part of a complex consisting of TWSG1 and CHRD. Interacts with the serine proteases, HTRA1 and HTRA3; the interaction with either inhibits BMP4-mediated signaling. The HTRA protease activity is required for this inhibition. Interacts with SOSTDC1. Interacts with FBN1 (via N-terminal domain) and FBN2. Interacts with type I receptor BMPR1A. Interacts with type II receptor BMPR2. Interacts with FSTL1; this interaction inhibits the activation of the BMP4/Smad1/5/8 signaling pathway. Interacts with SCUBE3. Interacts with TGFBR3.

It is found in the secreted. Its subcellular location is the extracellular space. The protein resides in the extracellular matrix. Its function is as follows. Growth factor of the TGF-beta superfamily that plays essential roles in many developmental processes, including neurogenesis, vascular development, angiogenesis and osteogenesis. Acts in concert with PTHLH/PTHRP to stimulate ductal outgrowth during embryonic mammary development and to inhibit hair follicle induction. Initiates the canonical BMP signaling cascade by associating with type I receptor BMPR1A and type II receptor BMPR2. Once all three components are bound together in a complex at the cell surface, BMPR2 phosphorylates and activates BMPR1A. In turn, BMPR1A propagates signal by phosphorylating SMAD1/5/8 that travel to the nucleus and act as activators and repressors of transcription of target genes. Positively regulates the expression of odontogenic development regulator MSX1 via inducing the IPO7-mediated import of SMAD1 to the nucleus. Required for MSX1-mediated mesenchymal molar tooth bud development beyond the bud stage, via promoting Wnt signaling. Acts as a positive regulator of odontoblast differentiation during mesenchymal tooth germ formation, expression is repressed during the bell stage by MSX1-mediated inhibition of CTNNB1 signaling. Able to induce its own expression in dental mesenchymal cells and also in the neighboring dental epithelial cells via an MSX1-mediated pathway. Can also signal through non-canonical BMP pathways such as ERK/MAP kinase, PI3K/Akt, or SRC cascades. For example, induces SRC phosphorylation which, in turn, activates VEGFR2, leading to an angiogenic response. This chain is Bone morphogenetic protein 4, found in Rattus norvegicus (Rat).